A 736-amino-acid polypeptide reads, in one-letter code: Polyribonucleotide nucleotidyltransferase (736 aa).

2 residues coordinate Mg(2+): Asp-493 and Asp-499. A KH domain is found at Pro-560–Ile-619. The 75-residue stretch at Gly-629–Glu-703 folds into the S1 motif domain. Residues Glu-710 to Thr-736 form a disordered region. The segment covering Arg-720 to Thr-736 has biased composition (basic and acidic residues).

The protein belongs to the polyribonucleotide nucleotidyltransferase family. Requires Mg(2+) as cofactor.

It localises to the cytoplasm. It catalyses the reaction RNA(n+1) + phosphate = RNA(n) + a ribonucleoside 5'-diphosphate. Functionally, involved in mRNA degradation. Catalyzes the phosphorolysis of single-stranded polyribonucleotides processively in the 3'- to 5'-direction. In Lawsonia intracellularis (strain PHE/MN1-00), this protein is Polyribonucleotide nucleotidyltransferase.